The chain runs to 98 residues: NADH-ubiquinone oxidoreductase chain 4L (98 aa).

Helical transmembrane passes span 1 to 21, 29 to 49, and 61 to 81; these read MPYIYTNLFLAFLTSLLGMLI, SLLCLEGMMLSMFIMTSLTIL, and IILLVFAACEAAVGLALLVMV.

Belongs to the complex I subunit 4L family. Core subunit of respiratory chain NADH dehydrogenase (Complex I) which is composed of 45 different subunits.

Its subcellular location is the mitochondrion inner membrane. The enzyme catalyses a ubiquinone + NADH + 5 H(+)(in) = a ubiquinol + NAD(+) + 4 H(+)(out). Its function is as follows. Core subunit of the mitochondrial membrane respiratory chain NADH dehydrogenase (Complex I) which catalyzes electron transfer from NADH through the respiratory chain, using ubiquinone as an electron acceptor. Part of the enzyme membrane arm which is embedded in the lipid bilayer and involved in proton translocation. This is NADH-ubiquinone oxidoreductase chain 4L (MT-ND4L) from Cephalopachus bancanus (Western tarsier).